The following is a 185-amino-acid chain: Large ribosomal subunit protein uL5 (185 aa).

The protein belongs to the universal ribosomal protein uL5 family. In terms of assembly, part of the 50S ribosomal subunit; part of the 5S rRNA/L5/L18/L25 subcomplex. Contacts the 5S rRNA and the P site tRNA. Forms a bridge to the 30S subunit in the 70S ribosome.

This is one of the proteins that bind and probably mediate the attachment of the 5S RNA into the large ribosomal subunit, where it forms part of the central protuberance. In the 70S ribosome it contacts protein S13 of the 30S subunit (bridge B1b), connecting the 2 subunits; this bridge is implicated in subunit movement. Contacts the P site tRNA; the 5S rRNA and some of its associated proteins might help stabilize positioning of ribosome-bound tRNAs. The chain is Large ribosomal subunit protein uL5 from Rhodopseudomonas palustris (strain BisB18).